The following is a 212-amino-acid chain: Imidazole glycerol phosphate synthase subunit HisH (212 aa).

The Glutamine amidotransferase type-1 domain occupies 1–210 (MIAVINYGAG…VRWSEAVQPK (210 aa)). Residue cysteine 79 is the Nucleophile of the active site. Residues histidine 185 and glutamate 187 contribute to the active site.

Heterodimer of HisH and HisF.

Its subcellular location is the cytoplasm. The enzyme catalyses 5-[(5-phospho-1-deoxy-D-ribulos-1-ylimino)methylamino]-1-(5-phospho-beta-D-ribosyl)imidazole-4-carboxamide + L-glutamine = D-erythro-1-(imidazol-4-yl)glycerol 3-phosphate + 5-amino-1-(5-phospho-beta-D-ribosyl)imidazole-4-carboxamide + L-glutamate + H(+). It catalyses the reaction L-glutamine + H2O = L-glutamate + NH4(+). It participates in amino-acid biosynthesis; L-histidine biosynthesis; L-histidine from 5-phospho-alpha-D-ribose 1-diphosphate: step 5/9. Functionally, IGPS catalyzes the conversion of PRFAR and glutamine to IGP, AICAR and glutamate. The HisH subunit catalyzes the hydrolysis of glutamine to glutamate and ammonia as part of the synthesis of IGP and AICAR. The resulting ammonia molecule is channeled to the active site of HisF. The polypeptide is Imidazole glycerol phosphate synthase subunit HisH (Chloroflexus aurantiacus (strain ATCC 29364 / DSM 637 / Y-400-fl)).